The following is a 372-amino-acid chain: Glutamate 5-kinase (372 aa).

Residue lysine 14 participates in ATP binding. Positions 54, 141, and 153 each coordinate substrate. Residues 173-174 and 215-221 each bind ATP; these read TD and TGGMATK. In terms of domain architecture, PUA spans 280-358; it reads RGQVVLDTGA…DNIEEILGYD (79 aa).

The protein belongs to the glutamate 5-kinase family.

Its subcellular location is the cytoplasm. It catalyses the reaction L-glutamate + ATP = L-glutamyl 5-phosphate + ADP. It functions in the pathway amino-acid biosynthesis; L-proline biosynthesis; L-glutamate 5-semialdehyde from L-glutamate: step 1/2. Its function is as follows. Catalyzes the transfer of a phosphate group to glutamate to form L-glutamate 5-phosphate. This chain is Glutamate 5-kinase, found in Shewanella halifaxensis (strain HAW-EB4).